The chain runs to 382 residues: Prostaglandin D2 receptor 2 (382 aa).

The Extracellular portion of the chain corresponds to 1-32; that stretch reads MANVTLKPLCPLLEEMVQLPNHSNSSLRYIDH. Asparagine 3, asparagine 21, and asparagine 24 each carry an N-linked (GlcNAc...) asparagine glycan. Residues 33–55 form a helical membrane-spanning segment; sequence VSVLLHGLASLLGLVENGLILFV. Residues 56 to 66 are Cytoplasmic-facing; that stretch reads VGCRMRQTVVT. The helical transmembrane segment at 67 to 88 threads the bilayer; the sequence is TWVLHLALSDLLAAASLPFFTY. Over 89 to 105 the chain is Extracellular; sequence FLAVGHSWELGTTFCKL. Cysteine 103 and cysteine 181 form a disulfide bridge. Residues 106–126 traverse the membrane as a helical segment; the sequence is HSSVFFLNMFASGFLLSAISL. Residues 127–145 lie on the Cytoplasmic side of the membrane; the sequence is DRCLQVVRPVWAQNHRTVA. Residues 146–167 traverse the membrane as a helical segment; that stretch reads VAHRVCLMLWALAVLNTIPYFV. The Extracellular portion of the chain corresponds to 168–209; sequence FRDTIPRLDGRIMCYYNLLLWNPGPDRDTTCDYRQKALAVSK. Residues 210–230 form a helical membrane-spanning segment; sequence FLLAFMVPLAIIASSHVAVSL. The Cytoplasmic segment spans residues 231-246; it reads RLHHRGRQRTGRFVRL. A helical membrane pass occupies residues 247–268; the sequence is VAAIVVAFVLCWGPYHIFSLLE. The Extracellular segment spans residues 269–287; sequence ARAHSVTTLRQLASRGLPF. A helical membrane pass occupies residues 288–307; it reads VTSLAFFNSVVNPLLYVFTC. The Cytoplasmic portion of the chain corresponds to 308–357; sequence PDMLYKLRRSLRAVLESVLVEDSDQSGGLRNRRRRASSTATPASTLLLAD. An Involved in the recycling of CRTH2 motif is present at residues 329 to 332; it reads DSDQ. Residues serine 330 and serine 344 each carry the phosphoserine modification.

The protein belongs to the G-protein coupled receptor 1 family. Phosphorylated.

Its subcellular location is the cell membrane. In terms of biological role, receptor for prostaglandin D2 (PGD2). Coupled to the G(i)-protein. Receptor activation may result in pertussis toxin-sensitive decreases in cAMP levels and Ca(2+) mobilization. PI3K signaling is also implicated in mediating PTGDR2 effects. PGD2 induced receptor internalization. CRTH2 internalization can be regulated by diverse kinases such as, PKC, PKA, GRK2, GPRK5/GRK5 and GRK6. Receptor activation is responsible, at least in part, in immune regulation and allergic/inflammation responses. In Mus musculus (Mouse), this protein is Prostaglandin D2 receptor 2 (Ptgdr2).